The chain runs to 192 residues: Ion-translocating oxidoreductase complex subunit A (192 aa).

Transmembrane regions (helical) follow at residues 5–25 (LLLL…FLGL), 39–59 (IGMS…SYLV), 65–85 (LPFD…AVVV), 102–122 (ALGI…VALL), 134–154 (AIYG…FSAM), and 171–191 (AIAM…TGLV).

It belongs to the NqrDE/RnfAE family. The complex is composed of six subunits: RnfA, RnfB, RnfC, RnfD, RnfE and RnfG.

Its subcellular location is the cell inner membrane. Functionally, part of a membrane-bound complex that couples electron transfer with translocation of ions across the membrane. The chain is Ion-translocating oxidoreductase complex subunit A from Shewanella sp. (strain ANA-3).